The primary structure comprises 789 residues: Molybdenum cofactor sulfurase (789 aa).

An N6-(pyridoxal phosphate)lysine modification is found at K251. C422 is an active-site residue. Residues G628–D789 form the MOSC domain. The residue at position 741 (S741) is a Phosphoserine.

This sequence belongs to the class-V pyridoxal-phosphate-dependent aminotransferase family. MOCOS subfamily. It depends on pyridoxal 5'-phosphate as a cofactor.

It carries out the reaction Mo-molybdopterin + L-cysteine + AH2 = thio-Mo-molybdopterin + L-alanine + A + H2O. The protein operates within cofactor biosynthesis; molybdopterin biosynthesis. Functionally, sulfurates the molybdenum cofactor. Sulfation of molybdenum is essential for xanthine dehydrogenase (XDH) and aldehyde oxidase (ADO) enzymes in which molybdenum cofactor is liganded by 1 oxygen and 1 sulfur atom in active form. This chain is Molybdenum cofactor sulfurase, found in Drosophila willistoni (Fruit fly).